Here is a 233-residue protein sequence, read N- to C-terminus: MAKITKRMRVIRDKVDATKSYDINEAVVLLKELATAKFVESVDVAINLGIDARKSDQNVRGATVLPHGTGRDIRVAVFTQGANAEAAKEAGADLIGMDDLADQVKKGIMDFDVVIASPDAMRVVGQLGTILGPRGLMPNPKVGTVTPNVAQAVKNAKAGQVRYRNDKNGIIHTTIGKVDFDAAQLKENLESLLVALKKSKPSSAKGIFIKKISISTTMGAGVSLDQGTLEASI.

It belongs to the universal ribosomal protein uL1 family. In terms of assembly, part of the 50S ribosomal subunit.

In terms of biological role, binds directly to 23S rRNA. The L1 stalk is quite mobile in the ribosome, and is involved in E site tRNA release. Protein L1 is also a translational repressor protein, it controls the translation of the L11 operon by binding to its mRNA. The protein is Large ribosomal subunit protein uL1 of Photobacterium profundum (strain SS9).